The chain runs to 222 residues: Lipid transferase CIDEC (222 aa).

Residues 1-19 are compositionally biased toward polar residues; sequence MAMYTAVSTSVVTQQQLSE. Disordered stretches follow at residues 1–33 and 203–222; these read MAMY…CRVT and EQPP…KMLQ. Positions 1–33 are required for liquid-liquid phase separation (LLPS); it reads MAMYTAVSTSVVTQQQLSEPSAEAPRARPCRVT. The CIDE-N domain maps to 26-103; sequence RARPCRVTTA…VLHKGQKWQP (78 aa).

Belongs to the CIDE family. Homodimer. Homooligomer; undergoes liquid-liquid phase separation (LLPS) via its N-terminus, facilitating lipid droplet fusion, occurs at the lipid droplet contact sites. Interacts with CIDEA. Interacts with PLIN1. Interacts with NFAT5; this interaction is direct and retains NFAT5 in the cytoplasm. Interacts with CEBPB. Interacts with isoform CLSTN3beta of CLSTN3; inhibiting the lipid transferase activity of CIDEC. Ubiquitinated and targeted to proteasomal degradation, resulting in a short half-life (about 15 minutes in 3T3-L1 cells). Protein stability depends on triaclyglycerol synthesis, fatty acid availability and lipid droplet formation.

Its subcellular location is the lipid droplet. It is found in the endoplasmic reticulum. The protein localises to the nucleus. It carries out the reaction a triacyl-sn-glycerol(in) = a triacyl-sn-glycerol(out). In terms of biological role, lipid transferase specifically expressed in white adipose tissue, which promotes unilocular lipid droplet formation by mediating lipid droplet fusion. Lipid droplet fusion promotes their enlargement, restricting lipolysis and favoring lipid storage. Localizes on the lipid droplet surface, at focal contact sites between lipid droplets, and mediates atypical lipid droplet fusion by undergoing liquid-liquid phase separation (LLPS) and promoting directional net neutral lipid transfer from the smaller to larger lipid droplets. The transfer direction may be driven by the internal pressure difference between the contacting lipid droplet pair. Its role in neutral lipid transfer and lipid droplet enlargement is activated by the interaction with PLIN1. May also act as a CEBPB coactivator in the white adipose tissue to control the expression of a subset of CEBPB downstream target genes, including SOCS1, SOCS3, TGFB1, TGFBR1, ID2 and XDH. When overexpressed in preadipocytes, induces apoptosis or increases cell susceptibility to apoptosis induced by serum deprivation or TGFB treatment. The polypeptide is Lipid transferase CIDEC (Bos taurus (Bovine)).